We begin with the raw amino-acid sequence, 360 residues long: DNA integrity scanning protein DisA (360 aa).

Residues 11–149 (ELDLSSILQF…ENMKYTLKDI (139 aa)) enclose the DAC domain. ATP is bound by residues Gly78, Leu96, and 109-113 (MRHRT).

The protein belongs to the DisA family. As to quaternary structure, homooligomer. Interacts with RadA. It depends on Mg(2+) as a cofactor.

The protein localises to the cytoplasm. The catalysed reaction is 2 ATP = 3',3'-c-di-AMP + 2 diphosphate. Diadenylate cyclase (DAC) activity is inhibited 2-fold by Holliday junction (HJ) DNA, further addition of RecG inhibits DAC activity 11-fold; RecG may relocate DisA from the HJ. DAC is inhibited by the interaction with RadA. Diadenylate cyclase activity is not affected by ssDNA or dsDNA, but three- and four-way junctions strongly inhibit the activity of DisA, suggesting the enzyme is regulated by branched nucleic acids. Participates in a DNA-damage check-point that is active prior to asymmetric division when DNA is damaged. Forms globular foci that rapidly scan along the chromosomes during sporulation, searching for lesions. Its ability to scan through the chromosome rapidly is due to its non-specific DNA-binding. When a lesion is present, DisA pauses at the lesion site. This triggers a cellular response that culminates in a temporary block in sporulation initiation. It is required, at least partially, to inhibit the activity of the transcription factor spo0A, which controls, among others, early sporulation genes. In B.subtilis c-di-AMP is a second messenger that mediates growth, DNA repair and cell wall homeostasis; it is toxic when present in excess. Limits the replication fork reggression activity of RecG; DisA inhibits the ATPase activity of RecG. By limiting RecG-mediated fork regression, DisA provides time for removal of potentially lethal DNA lesions. Its function is as follows. One of 3 paralogous diadenylate cyclases (DAC) in this bacteria. Has diadenylate cyclase activity, catalyzing the condensation of 2 ATP molecules into cyclic di-AMP (c-di-AMP). c-di-AMP acts as a signaling molecule that couples DNA integrity with progression of sporulation. The rise in c-di-AMP level generated by DisA while scanning the chromosome operates as a positive signal that advances sporulation; upon encountering a lesion, the DisA focus arrests at the damaged site and halts c-di-AMP synthesis. Does not convert GTP to c-di-GMP. The protein is DNA integrity scanning protein DisA of Bacillus subtilis (strain 168).